A 197-amino-acid polypeptide reads, in one-letter code: Imidazoleglycerol-phosphate dehydratase (197 aa).

Belongs to the imidazoleglycerol-phosphate dehydratase family.

The protein resides in the cytoplasm. It catalyses the reaction D-erythro-1-(imidazol-4-yl)glycerol 3-phosphate = 3-(imidazol-4-yl)-2-oxopropyl phosphate + H2O. It participates in amino-acid biosynthesis; L-histidine biosynthesis; L-histidine from 5-phospho-alpha-D-ribose 1-diphosphate: step 6/9. This Thermobifida fusca (strain YX) protein is Imidazoleglycerol-phosphate dehydratase.